We begin with the raw amino-acid sequence, 361 residues long: Phospho-N-acetylmuramoyl-pentapeptide-transferase (361 aa).

The next 10 membrane-spanning stretches (helical) occupy residues 27 to 47 (GALF…ISLL), 72 to 92 (TPTM…LLWA), 99 to 119 (VWVT…DDYL), 135 to 155 (LALE…YSPA), 169 to 189 (ALLN…VGAG), 200 to 220 (GLAI…AYLV), 240 to 260 (LAVV…FNAP), 264 to 284 (IFMG…IAVA), 289 to 309 (IVLA…IIQV), and 338 to 358 (QVVI…LATL).

Belongs to the glycosyltransferase 4 family. MraY subfamily. Requires Mg(2+) as cofactor.

Its subcellular location is the cell inner membrane. The catalysed reaction is UDP-N-acetyl-alpha-D-muramoyl-L-alanyl-gamma-D-glutamyl-meso-2,6-diaminopimeloyl-D-alanyl-D-alanine + di-trans,octa-cis-undecaprenyl phosphate = di-trans,octa-cis-undecaprenyl diphospho-N-acetyl-alpha-D-muramoyl-L-alanyl-D-glutamyl-meso-2,6-diaminopimeloyl-D-alanyl-D-alanine + UMP. It participates in cell wall biogenesis; peptidoglycan biosynthesis. Its function is as follows. Catalyzes the initial step of the lipid cycle reactions in the biosynthesis of the cell wall peptidoglycan: transfers peptidoglycan precursor phospho-MurNAc-pentapeptide from UDP-MurNAc-pentapeptide onto the lipid carrier undecaprenyl phosphate, yielding undecaprenyl-pyrophosphoryl-MurNAc-pentapeptide, known as lipid I. In Methylobacterium radiotolerans (strain ATCC 27329 / DSM 1819 / JCM 2831 / NBRC 15690 / NCIMB 10815 / 0-1), this protein is Phospho-N-acetylmuramoyl-pentapeptide-transferase.